The following is a 130-amino-acid chain: Small ribosomal subunit protein uS9 (130 aa).

This sequence belongs to the universal ribosomal protein uS9 family.

The protein is Small ribosomal subunit protein uS9 of Pseudomonas fluorescens (strain Pf0-1).